We begin with the raw amino-acid sequence, 376 residues long: Erythronate-4-phosphate dehydrogenase (376 aa).

Residues serine 45 and threonine 66 each coordinate substrate. NAD(+)-binding positions include 126 to 127, aspartate 146, threonine 174, 201 to 203, and aspartate 227; these read QV and ASR. Residue arginine 203 is part of the active site. Glutamate 232 is an active-site residue. Histidine 249 functions as the Proton donor in the catalytic mechanism. An NAD(+)-binding site is contributed by glycine 252. Tyrosine 253 contributes to the substrate binding site.

Belongs to the D-isomer specific 2-hydroxyacid dehydrogenase family. PdxB subfamily. Homodimer.

The protein resides in the cytoplasm. It carries out the reaction 4-phospho-D-erythronate + NAD(+) = (R)-3-hydroxy-2-oxo-4-phosphooxybutanoate + NADH + H(+). It participates in cofactor biosynthesis; pyridoxine 5'-phosphate biosynthesis; pyridoxine 5'-phosphate from D-erythrose 4-phosphate: step 2/5. In terms of biological role, catalyzes the oxidation of erythronate-4-phosphate to 3-hydroxy-2-oxo-4-phosphonooxybutanoate. This Ectopseudomonas mendocina (strain ymp) (Pseudomonas mendocina) protein is Erythronate-4-phosphate dehydrogenase.